Consider the following 438-residue polypeptide: Glucosamine kinase (438 aa).

Residues lysine 133, alanine 186–leucine 188, and aspartate 193 each bind ATP. Aspartate 300 contributes to the D-glucosamine binding site. The Mg(2+) site is built by glutamine 305, aspartate 317, and aspartate 319. The short motif at glutamine 405 to tryptophan 420 is the Substrate specificity determinant motif element. A D-glucosamine-binding site is contributed by glutamate 409.

It belongs to the actinobacterial glucosamine kinase family. As to quaternary structure, monomer. Mg(2+) serves as cofactor.

The catalysed reaction is D-glucosamine + ATP = D-glucosamine 6-phosphate + ADP + H(+). Functionally, catalyzes the ATP-dependent phosphorylation of D-glucosamine (GlcN) to D-glucosamine 6-phosphate. May be involved in the phosphorylation of acquired extracellular GlcN derived from the hydrolysis of chitosan, i.e., in the incorporation of exogenous GlcN into the bacterial GlcNAc metabolism. To a lesser extent, is also active on glucose, but is unable to phosphorylate maltose, 18 other sugars and several aminoglycoside antibiotics. In Streptacidiphilus jiangxiensis, this protein is Glucosamine kinase.